Here is a 213-residue protein sequence, read N- to C-terminus: Leucine-rich repeat protein 1 (213 aa).

The first 21 residues, 1 to 21, serve as a signal peptide directing secretion; it reads MGAGALGVVAMVAAAVVVAMA. 4 LRR repeats span residues 90-113, 115-137, 138-161, and 163-186; these read DHLQYLELYKNNIQGTIPSELGNL, NLISLDLYKNNISGTIPPTLGKL, TSLVFLRLNGNRLTGPIPRELAGI, and SLKVVDVSSNDLCGTIPTSGPFEH.

Interacts with HIR1.

The protein resides in the early endosome membrane. The protein localises to the late endosome membrane. It is found in the cell membrane. Involved in plant defense response. This is Leucine-rich repeat protein 1 from Oryza sativa subsp. indica (Rice).